Reading from the N-terminus, the 173-residue chain is MILSGLEIKDKLGSDIVIEPYDDSRLNPNSYNLRLHNELLVYDNNELDMKKPNTASPLIIPEEGLLLETGKLYLGRTIEYTESHNYVPMLEGRSSIGRLGLFVHVTAGFGDVGFCGFWTLEIFCVHPIRVYPGVEICQIFYHTIEGKYENYKSGKYQHNKGIQPSLLYKDFEK.

Residues 93–98 (RSSIGR), aspartate 111, 119–121 (TLE), glutamine 138, and tyrosine 151 each bind dCTP. Residue glutamate 121 is the Proton donor/acceptor of the active site.

The protein belongs to the dCTP deaminase family. In terms of assembly, homotrimer.

The catalysed reaction is dCTP + 2 H2O = dUMP + NH4(+) + diphosphate. It participates in pyrimidine metabolism; dUMP biosynthesis; dUMP from dCTP: step 1/1. Bifunctional enzyme that catalyzes both the deamination of dCTP to dUTP and the hydrolysis of dUTP to dUMP without releasing the toxic dUTP intermediate. In Cytophaga hutchinsonii (strain ATCC 33406 / DSM 1761 / CIP 103989 / NBRC 15051 / NCIMB 9469 / D465), this protein is dCTP deaminase, dUMP-forming.